The following is a 466-amino-acid chain: Cytochrome b561 and DOMON domain-containing protein At3g59070 (466 aa).

The first 25 residues, 1-25 (MSLSSRATLVVLCCLFMLIPSFTTA), serve as a signal peptide directing secretion. One can recognise a DOMON domain in the interval 57–172 (LNSYLHFNYA…TVVNHLWQDG (116 aa)). The Cytochrome b561 domain occupies 179–380 (RLGMHAMSGD…MEILQFKKRW (202 aa)). 3 consecutive transmembrane segments (helical) span residues 219–239 (IHAI…VMAA), 252–272 (WFYI…IGGL), and 287–307 (TLHT…ILSL). Heme b contacts are provided by H220, H256, H289, and H325. The next 2 membrane-spanning stretches (helical) occupy residues 327-347 (TMGY…LSIL) and 355-375 (IAYT…EILQ).

Heme b serves as cofactor.

It is found in the membrane. Functionally, may act as a catecholamine-responsive trans-membrane electron transporter. The sequence is that of Cytochrome b561 and DOMON domain-containing protein At3g59070 from Arabidopsis thaliana (Mouse-ear cress).